Here is a 334-residue protein sequence, read N- to C-terminus: Fructose-1,6-bisphosphatase class 1 (334 aa).

Mg(2+)-binding residues include Glu92, Asp114, Leu116, and Asp117. Substrate contacts are provided by residues 117–120 (DGSS) and Asn209. Residue Glu281 coordinates Mg(2+).

This sequence belongs to the FBPase class 1 family. Homotetramer. Mg(2+) is required as a cofactor.

It is found in the cytoplasm. It carries out the reaction beta-D-fructose 1,6-bisphosphate + H2O = beta-D-fructose 6-phosphate + phosphate. Its pathway is carbohydrate biosynthesis; gluconeogenesis. The chain is Fructose-1,6-bisphosphatase class 1 from Nitrosomonas europaea (strain ATCC 19718 / CIP 103999 / KCTC 2705 / NBRC 14298).